A 178-amino-acid chain; its full sequence is RNA pyrophosphohydrolase (178 aa).

Positions 18–171 (PYRPCVGLMV…KRKVYEQVVA (154 aa)) constitute a Nudix hydrolase domain. The Nudix box motif lies at 59-80 (GGIDKGEDPAQAALRELYEETG).

Belongs to the Nudix hydrolase family. RppH subfamily. A divalent metal cation serves as cofactor.

Its function is as follows. Accelerates the degradation of transcripts by removing pyrophosphate from the 5'-end of triphosphorylated RNA, leading to a more labile monophosphorylated state that can stimulate subsequent ribonuclease cleavage. In Brucella abortus (strain 2308), this protein is RNA pyrophosphohydrolase.